We begin with the raw amino-acid sequence, 380 residues long: Probable tRNA-splicing endonuclease subunit sen2 (380 aa).

Active-site residues include Y281, H289, and K325.

Belongs to the tRNA-intron endonuclease family. As to quaternary structure, heterotetramer composed of sen2, sen15, sen34 and sen54. Interacts directly with sen54.

The catalysed reaction is pretRNA = a 3'-half-tRNA molecule with a 5'-OH end + a 5'-half-tRNA molecule with a 2',3'-cyclic phosphate end + an intron with a 2',3'-cyclic phosphate and a 5'-hydroxyl terminus.. Its function is as follows. Constitutes one of the two catalytic subunit of the tRNA-splicing endonuclease complex, a complex responsible for identification and cleavage of the splice sites in pre-tRNA. It cleaves pre-tRNA at the 5'- and 3'-splice sites to release the intron. The products are an intron and two tRNA half-molecules bearing 2',3'-cyclic phosphate and 5'-OH termini. There are no conserved sequences at the splice sites, but the intron is invariably located at the same site in the gene, placing the splice sites an invariant distance from the constant structural features of the tRNA body. This subunit may anchor the endonuclease complex to the nuclear membrane. Probably carries the active site for 5'-splice site cleavage. This is Probable tRNA-splicing endonuclease subunit sen2 (sen2) from Schizosaccharomyces pombe (strain 972 / ATCC 24843) (Fission yeast).